The chain runs to 125 residues: Ribosome-binding factor A (125 aa).

The protein belongs to the RbfA family. As to quaternary structure, monomer. Binds 30S ribosomal subunits, but not 50S ribosomal subunits or 70S ribosomes.

Its subcellular location is the cytoplasm. Functionally, one of several proteins that assist in the late maturation steps of the functional core of the 30S ribosomal subunit. Associates with free 30S ribosomal subunits (but not with 30S subunits that are part of 70S ribosomes or polysomes). Required for efficient processing of 16S rRNA. May interact with the 5'-terminal helix region of 16S rRNA. This chain is Ribosome-binding factor A, found in Fervidobacterium nodosum (strain ATCC 35602 / DSM 5306 / Rt17-B1).